A 489-amino-acid chain; its full sequence is Rhamnulokinase (489 aa).

ATP is bound at residue 13-17 (ASSGR). An intrachain disulfide couples Cys68 to Cys222. Substrate-binding positions include Gly83 and 236 to 238 (HDT). Asp237 acts as the Proton acceptor in catalysis. An ATP-binding site is contributed by Thr259. A substrate-binding site is contributed by Asn296. Residue Gln304 participates in ATP binding. An intrachain disulfide couples Cys353 to Cys370. Gly402 lines the ATP pocket. The cysteines at positions 413 and 417 are disulfide-linked.

It belongs to the rhamnulokinase family. Requires Mg(2+) as cofactor.

The catalysed reaction is L-rhamnulose + ATP = L-rhamnulose 1-phosphate + ADP + H(+). It participates in carbohydrate degradation; L-rhamnose degradation; glycerone phosphate from L-rhamnose: step 2/3. In terms of biological role, involved in the catabolism of L-rhamnose (6-deoxy-L-mannose). Catalyzes the transfer of the gamma-phosphate group from ATP to the 1-hydroxyl group of L-rhamnulose to yield L-rhamnulose 1-phosphate. This chain is Rhamnulokinase, found in Salmonella dublin (strain CT_02021853).